Consider the following 434-residue polypeptide: Serine hydroxymethyltransferase (434 aa).

Residues Leu-133 and 137–139 (GHL) contribute to the (6S)-5,6,7,8-tetrahydrofolate site. Lys-242 bears the N6-(pyridoxal phosphate)lysine mark.

The protein belongs to the SHMT family. Homodimer. The cofactor is pyridoxal 5'-phosphate.

Its subcellular location is the cytoplasm. The catalysed reaction is (6R)-5,10-methylene-5,6,7,8-tetrahydrofolate + glycine + H2O = (6S)-5,6,7,8-tetrahydrofolate + L-serine. Its pathway is one-carbon metabolism; tetrahydrofolate interconversion. It participates in amino-acid biosynthesis; glycine biosynthesis; glycine from L-serine: step 1/1. In terms of biological role, catalyzes the reversible interconversion of serine and glycine with tetrahydrofolate (THF) serving as the one-carbon carrier. This reaction serves as the major source of one-carbon groups required for the biosynthesis of purines, thymidylate, methionine, and other important biomolecules. Also exhibits THF-independent aldolase activity toward beta-hydroxyamino acids, producing glycine and aldehydes, via a retro-aldol mechanism. In Hyphomicrobium methylovorum, this protein is Serine hydroxymethyltransferase.